Here is a 247-residue protein sequence, read N- to C-terminus: ATP synthase subunit a, chloroplastic (247 aa).

The next 5 helical transmembrane spans lie at 38 to 58, 95 to 115, 134 to 154, 199 to 219, and 220 to 240; these read QVLI…ILVV, VPFI…GALL, INTT…AGIS, LVVV…VMFL, and GLFT…AYIG.

This sequence belongs to the ATPase A chain family. In terms of assembly, F-type ATPases have 2 components, CF(1) - the catalytic core - and CF(0) - the membrane proton channel. CF(1) has five subunits: alpha(3), beta(3), gamma(1), delta(1), epsilon(1). CF(0) has four main subunits: a, b, b' and c.

The protein resides in the plastid. It is found in the chloroplast thylakoid membrane. Its function is as follows. Key component of the proton channel; it plays a direct role in the translocation of protons across the membrane. This is ATP synthase subunit a, chloroplastic from Cicer arietinum (Chickpea).